We begin with the raw amino-acid sequence, 141 residues long: Nucleoside diphosphate kinase (141 aa).

ATP contacts are provided by Lys11, Phe59, Arg87, Thr93, Arg104, and Asn114. The active-site Pros-phosphohistidine intermediate is His117.

This sequence belongs to the NDK family. Homotetramer. Mg(2+) serves as cofactor.

Its subcellular location is the cytoplasm. It catalyses the reaction a 2'-deoxyribonucleoside 5'-diphosphate + ATP = a 2'-deoxyribonucleoside 5'-triphosphate + ADP. The catalysed reaction is a ribonucleoside 5'-diphosphate + ATP = a ribonucleoside 5'-triphosphate + ADP. Major role in the synthesis of nucleoside triphosphates other than ATP. The ATP gamma phosphate is transferred to the NDP beta phosphate via a ping-pong mechanism, using a phosphorylated active-site intermediate. In Hamiltonella defensa subsp. Acyrthosiphon pisum (strain 5AT), this protein is Nucleoside diphosphate kinase.